The sequence spans 150 residues: Lipoprotein signal peptidase (150 aa).

3 consecutive transmembrane segments (helical) span residues Phe-8 to Ala-28, Gly-58 to Leu-78, and Thr-81 to Asp-101. Residues Asp-116 and Asp-132 contribute to the active site. A helical membrane pass occupies residues Val-126–Leu-146.

Belongs to the peptidase A8 family.

It is found in the cell membrane. It carries out the reaction Release of signal peptides from bacterial membrane prolipoproteins. Hydrolyzes -Xaa-Yaa-Zaa-|-(S,diacylglyceryl)Cys-, in which Xaa is hydrophobic (preferably Leu), and Yaa (Ala or Ser) and Zaa (Gly or Ala) have small, neutral side chains.. It participates in protein modification; lipoprotein biosynthesis (signal peptide cleavage). Its function is as follows. This protein specifically catalyzes the removal of signal peptides from prolipoproteins. The sequence is that of Lipoprotein signal peptidase from Tropheryma whipplei (strain Twist) (Whipple's bacillus).